A 265-amino-acid polypeptide reads, in one-letter code: Dimethylsulfide dehydrogenase subunit gamma (265 aa).

An N-terminal signal peptide occupies residues 1–25; sequence MPGFRFLLAATAAFLATSPALPLSA. Heme b is bound by residues H81 and M147.

Heterotrimer of alpha, beta and gamma subunits. Heme b is required as a cofactor.

Its subcellular location is the periplasm. In terms of biological role, may transfer electrons to the iron-sulfur centers of DdhB. This chain is Dimethylsulfide dehydrogenase subunit gamma (ddhC), found in Rhodovulum sulfidophilum (Rhodobacter sulfidophilus).